The primary structure comprises 731 residues: 1,4-alpha-glucan branching enzyme GlgB (731 aa).

Aspartate 412 acts as the Nucleophile in catalysis. The active-site Proton donor is the glutamate 465.

It belongs to the glycosyl hydrolase 13 family. GlgB subfamily. Monomer.

It catalyses the reaction Transfers a segment of a (1-&gt;4)-alpha-D-glucan chain to a primary hydroxy group in a similar glucan chain.. The protein operates within glycan biosynthesis; glycogen biosynthesis. Functionally, catalyzes the formation of the alpha-1,6-glucosidic linkages in glycogen by scission of a 1,4-alpha-linked oligosaccharide from growing alpha-1,4-glucan chains and the subsequent attachment of the oligosaccharide to the alpha-1,6 position. The protein is 1,4-alpha-glucan branching enzyme GlgB of Bordetella bronchiseptica (strain ATCC BAA-588 / NCTC 13252 / RB50) (Alcaligenes bronchisepticus).